The sequence spans 201 residues: FMN-dependent NADH:quinone oxidoreductase (201 aa).

FMN is bound by residues Ser10, 16-18, 96-99, and 140-143; these read SQS, MYNF, and SRGG.

This sequence belongs to the azoreductase type 1 family. In terms of assembly, homodimer. FMN is required as a cofactor.

The catalysed reaction is 2 a quinone + NADH + H(+) = 2 a 1,4-benzosemiquinone + NAD(+). It catalyses the reaction N,N-dimethyl-1,4-phenylenediamine + anthranilate + 2 NAD(+) = 2-(4-dimethylaminophenyl)diazenylbenzoate + 2 NADH + 2 H(+). Quinone reductase that provides resistance to thiol-specific stress caused by electrophilic quinones. Functionally, also exhibits azoreductase activity. Catalyzes the reductive cleavage of the azo bond in aromatic azo compounds to the corresponding amines. In Citrobacter koseri (strain ATCC BAA-895 / CDC 4225-83 / SGSC4696), this protein is FMN-dependent NADH:quinone oxidoreductase.